Consider the following 578-residue polypeptide: Membrane protein insertase YidC (578 aa).

Residues 3 to 23 (IQRSILIVALAVVSYLLVLQW) traverse the membrane as a helical segment. The tract at residues 34-72 (AASASMNTTQGLPDTPSASGTSSDVPTAQSSAAGSEAAD) is disordered. Residues 37–66 (ASMNTTQGLPDTPSASGTSSDVPTAQSSAA) are compositionally biased toward polar residues. A run of 5 helical transmembrane segments spans residues 361 to 381 (LELT…FWLL), 387 to 407 (LIGN…LAFF), 457 to 477 (LGGC…YWVL), 500 to 520 (PFFI…MLNP), and 535 to 555 (PIIF…YWVV).

Belongs to the OXA1/ALB3/YidC family. Type 1 subfamily. In terms of assembly, interacts with the Sec translocase complex via SecD. Specifically interacts with transmembrane segments of nascent integral membrane proteins during membrane integration.

It is found in the cell inner membrane. Functionally, required for the insertion and/or proper folding and/or complex formation of integral membrane proteins into the membrane. Involved in integration of membrane proteins that insert both dependently and independently of the Sec translocase complex, as well as at least some lipoproteins. Aids folding of multispanning membrane proteins. This chain is Membrane protein insertase YidC, found in Pseudomonas aeruginosa (strain ATCC 15692 / DSM 22644 / CIP 104116 / JCM 14847 / LMG 12228 / 1C / PRS 101 / PAO1).